The primary structure comprises 90 residues: U7-theraphotoxin-Hhn1i (90 aa).

A signal peptide spans 1 to 19; that stretch reads MKTAIFTVVLALAVFAVLS. A propeptide spanning residues 20–50 is cleaved from the precursor; that stretch reads FGWEANEKALSEEFTELIHEKEAASETEARE. Disulfide bonds link Cys-51/Cys-65, Cys-58/Cys-70, and Cys-64/Cys-81.

This sequence belongs to the neurotoxin 10 (Hwtx-1) family. 13 (Hntx-13) subfamily. Expressed by the venom gland.

The protein resides in the secreted. In terms of biological role, ion channel inhibitor. This chain is U7-theraphotoxin-Hhn1i, found in Cyriopagopus hainanus (Chinese bird spider).